Reading from the N-terminus, the 306-residue chain is Ornithine carbamoyltransferase (306 aa).

Residues 50–53 (STRT), Gln77, Arg101, and 128–131 (HPCQ) each bind carbamoyl phosphate. L-ornithine-binding positions include Asn160, Asp224, and 228-229 (SM). Carbamoyl phosphate is bound by residues 264–265 (CL) and Arg292.

This sequence belongs to the aspartate/ornithine carbamoyltransferase superfamily. OTCase family.

Its subcellular location is the cytoplasm. It carries out the reaction carbamoyl phosphate + L-ornithine = L-citrulline + phosphate + H(+). It participates in amino-acid biosynthesis; L-arginine biosynthesis; L-arginine from L-ornithine and carbamoyl phosphate: step 1/3. In terms of biological role, reversibly catalyzes the transfer of the carbamoyl group from carbamoyl phosphate (CP) to the N(epsilon) atom of ornithine (ORN) to produce L-citrulline. This Mycobacterium leprae (strain TN) protein is Ornithine carbamoyltransferase.